The sequence spans 385 residues: Putative transport protein BpOF4_00890 (385 aa).

Transmembrane regions (helical) follow at residues 42-62, 63-83, 93-113, 191-211, 255-275, 276-296, 304-324, and 350-370; these read TIWI…ILPV, SLPL…VNAL, VAVM…GYYI, SIPG…LFML, IIIF…VALL, MAFI…VILA, IVGD…LLII, and LGLM…VIAF.

It belongs to the autoinducer-2 exporter (AI-2E) (TC 2.A.86) family.

The protein resides in the cell membrane. This Alkalihalophilus pseudofirmus (strain ATCC BAA-2126 / JCM 17055 / OF4) (Bacillus pseudofirmus) protein is Putative transport protein BpOF4_00890.